Reading from the N-terminus, the 342-residue chain is Polyprenyl transferase trt2 (342 aa).

9 consecutive transmembrane segments (helical) span residues 71-91, 95-115, 141-161, 163-183, 187-207, 216-236, 261-278, 282-304, and 319-339; these read VVGV…TVLL, IILS…NDLI, AALL…LLPS, CTVE…GKRF, PQLI…SLEV, TLSM…VYAC, LAYG…LGGV, LGLP…FLSV, and AKSS…LEYL.

It belongs to the UbiA prenyltransferase family. Requires Mg(2+) as cofactor.

Its subcellular location is the membrane. It carries out the reaction 3,5-dimethylorsellinate + (2E,6E)-farnesyl diphosphate = (3R)-3-farnesyl-6-hydroxy-2,3,5-trimethyl-4-oxocyclohexa-1,5-diene-1-carboxylate + diphosphate + H(+). It functions in the pathway secondary metabolite biosynthesis; terpenoid biosynthesis. Functionally, polyprenyl transferase; part of the gene cluster that mediates the biosynthesis of terretonin, a fungal meroterpenoid that acts as a mycotoxin. The first step of the pathway is the synthesis of 3,5-dimethylorsellinic acid (DMOA) by the polyketide synthase trt4. DMOA is then prenylated into farnesyl-DMOA by the polyprenyl transferase trt2. Methylation by the methyltransferase trt5 then leads to farnesyl-DMOA methyl ester which is further subject to epoxidation by the FAD-dependent monooxygenase trt8 to yield epoxyfarnesyl-DMOA methyl ester. Cyclization of epoxyfarnesyl-DMOA methyl ester by the terpene cyclase trt1 leads to a tetracycle intermediate which is in turn converted to preterretonin. Dehydrogenase trt9 comes next to transform preterretonin to preterrenoid. The FAD-dependent monooxygenase trt3 is then required for the C-hydroxylation at C16 of preterrenoid to yield terrenoid. The cytochrome P450 trt6 catalyzes three successive oxidations to transform terrenoid into an unstable intermediate, which then undergoes the D-ring expansion and unusual rearrangement of the methoxy group to afford the core skeleton of terretonin. Trt14 catalyzes the D-ring expansion of terretonin involving intramolecular methoxy rearrangement as well as the hydrolysis of the expanded D-ring and the methyl ester moiety. Finally, the nonheme iron-dependent dioxygenase trt7 accomplishes the last two oxidation reactions steps to complete the biosynthesis of terretonin. Terretonin C is produced via spontaneous decarboxylation of the terretonin precursor. Another shunt product of the terretonin biosynthesis is dihydrofarnesyl-DMOA, derived from epoxyfarnesyl-DMOA through hydrolysis of the epoxide. This is Polyprenyl transferase trt2 from Aspergillus terreus (strain NIH 2624 / FGSC A1156).